Consider the following 213-residue polypeptide: Thiopurine S-methyltransferase (213 aa).

Residues W10, L45, E66, and R121 each coordinate S-adenosyl-L-methionine.

It belongs to the class I-like SAM-binding methyltransferase superfamily. TPMT family.

It is found in the cytoplasm. The enzyme catalyses S-adenosyl-L-methionine + a thiopurine = S-adenosyl-L-homocysteine + a thiopurine S-methylether.. This chain is Thiopurine S-methyltransferase, found in Aliivibrio fischeri (strain ATCC 700601 / ES114) (Vibrio fischeri).